Consider the following 1136-residue polypeptide: Protein stu-1 (1136 aa).

HEAT repeat units follow at residues 95–133 (TLPV…ERSV) and 167–205 (YVPT…KSDL). Disordered regions lie at residues 524-554 (KDPH…MGAP), 567-794 (RAMA…QPQI), and 821-884 (TAGQ…LLDS). Residues 595–622 (VSSTSQASVASASTASAVPAPTKSAFGA) are compositionally biased toward low complexity. A compositionally biased stretch (pro residues) spans 659-668 (PAEPASPPSK). The span at 673-683 (TVTSPKTQTLV) shows a compositional bias: polar residues. Over residues 701 to 716 (SSESGIPIPVSGISSP) the composition is skewed to low complexity. 2 stretches are compositionally biased toward polar residues: residues 777–793 (LPTQ…QQPQ) and 822–833 (AGQTQPQSTYTS).

The protein belongs to the CLASP family. In terms of assembly, interacts with microtubules.

The protein localises to the nucleus. Its subcellular location is the cytoplasm. It is found in the cytoskeleton. The protein resides in the spindle. Microtubule binding protein that promotes the stabilization of dynamic microtubules. Required for mitotic spindle formation. The sequence is that of Protein stu-1 (stu-1) from Neurospora crassa (strain ATCC 24698 / 74-OR23-1A / CBS 708.71 / DSM 1257 / FGSC 987).